We begin with the raw amino-acid sequence, 280 residues long: Putative pyruvate, phosphate dikinase regulatory protein (280 aa).

152–159 (GVSRTSKS) is a binding site for ADP.

The protein belongs to the pyruvate, phosphate/water dikinase regulatory protein family. PDRP subfamily.

It carries out the reaction N(tele)-phospho-L-histidyl/L-threonyl-[pyruvate, phosphate dikinase] + ADP = N(tele)-phospho-L-histidyl/O-phospho-L-threonyl-[pyruvate, phosphate dikinase] + AMP + H(+). It catalyses the reaction N(tele)-phospho-L-histidyl/O-phospho-L-threonyl-[pyruvate, phosphate dikinase] + phosphate + H(+) = N(tele)-phospho-L-histidyl/L-threonyl-[pyruvate, phosphate dikinase] + diphosphate. Bifunctional serine/threonine kinase and phosphorylase involved in the regulation of the pyruvate, phosphate dikinase (PPDK) by catalyzing its phosphorylation/dephosphorylation. The protein is Putative pyruvate, phosphate dikinase regulatory protein of Anaplasma phagocytophilum (strain HZ).